A 214-amino-acid polypeptide reads, in one-letter code: Thymidylate kinase (214 aa).

Residue 7–14 (GIEGAGKT) coordinates ATP.

It belongs to the thymidylate kinase family.

The catalysed reaction is dTMP + ATP = dTDP + ADP. Functionally, phosphorylation of dTMP to form dTDP in both de novo and salvage pathways of dTTP synthesis. The protein is Thymidylate kinase of Desulfosudis oleivorans (strain DSM 6200 / JCM 39069 / Hxd3) (Desulfococcus oleovorans).